The following is a 206-amino-acid chain: Large ribosomal subunit protein bL17 (206 aa).

The segment covering 130 to 141 (ERARGTRFEARR) has biased composition (basic and acidic residues). The interval 130-206 (ERARGTRFEA…SGAGEQNSAN (77 aa)) is disordered. Composition is skewed to low complexity over residues 160-181 (TAAA…GAAG) and 189-200 (DDSGIGDDSGAG).

It belongs to the bacterial ribosomal protein bL17 family. Part of the 50S ribosomal subunit. Contacts protein L32.

The polypeptide is Large ribosomal subunit protein bL17 (Frankia casuarinae (strain DSM 45818 / CECT 9043 / HFP020203 / CcI3)).